A 106-amino-acid polypeptide reads, in one-letter code: UPF0060 membrane protein RHE_CH01408 (106 aa).

The next 4 membrane-spanning stretches (helical) occupy residues 4-24 (IIYA…WAWL), 30-50 (AWWL…LTLV), 59-79 (FAAY…LIEG), and 86-106 (DIGG…APRA).

The protein belongs to the UPF0060 family.

The protein resides in the cell inner membrane. The polypeptide is UPF0060 membrane protein RHE_CH01408 (Rhizobium etli (strain ATCC 51251 / DSM 11541 / JCM 21823 / NBRC 15573 / CFN 42)).